The chain runs to 147 residues: Ribosome maturation factor RimP (147 aa).

It belongs to the RimP family.

It is found in the cytoplasm. In terms of biological role, required for maturation of 30S ribosomal subunits. The sequence is that of Ribosome maturation factor RimP from Legionella pneumophila (strain Paris).